Here is a 238-residue protein sequence, read N- to C-terminus: 3-deoxy-D-manno-octulosonic acid kinase (238 aa).

D167 is a catalytic residue.

Belongs to the protein kinase superfamily. KdkA/RfaP family.

It is found in the cell inner membrane. It catalyses the reaction an alpha-Kdo-(2-&gt;6)-lipid IVA + ATP = a 4-O-phospho-alpha-Kdo-(2-&gt;6)-lipid IVA + ADP + H(+). The protein operates within bacterial outer membrane biogenesis; LPS core biosynthesis. In terms of biological role, catalyzes the ATP-dependent phosphorylation of the 3-deoxy-D-manno-octulosonic acid (Kdo) residue in Kdo-lipid IV(A) at the 4-OH position. In Vibrio parahaemolyticus serotype O3:K6 (strain RIMD 2210633), this protein is 3-deoxy-D-manno-octulosonic acid kinase.